Here is a 198-residue protein sequence, read N- to C-terminus: Penicillin-binding protein activator LpoB (198 aa).

The N-terminal stretch at 1–19 is a signal peptide; that stretch reads MIRSVNRTGALMMALILSG. A lipid anchor (N-palmitoyl cysteine) is attached at cysteine 20. A lipid anchor (S-diacylglycerol cysteine) is attached at cysteine 20. The segment covering 26-37 has biased composition (low complexity); sequence QPAPVEPTQPVE. Residues 26–59 are disordered; it reads QPAPVEPTQPVEPVQPVPQPEQPIPQPQPVPQPP. Positions 38-59 are enriched in pro residues; the sequence is PVQPVPQPEQPIPQPQPVPQPP.

It belongs to the LpoB family. As to quaternary structure, interacts with PBP1b.

The protein localises to the cell outer membrane. Functionally, regulator of peptidoglycan synthesis that is essential for the function of penicillin-binding protein 1B (PBP1b). The protein is Penicillin-binding protein activator LpoB of Pantoea ananatis (strain LMG 20103).